We begin with the raw amino-acid sequence, 88 residues long: Small ribosomal subunit protein bS20 (88 aa).

It belongs to the bacterial ribosomal protein bS20 family.

Functionally, binds directly to 16S ribosomal RNA. This Chelativorans sp. (strain BNC1) protein is Small ribosomal subunit protein bS20.